The primary structure comprises 448 residues: Exodeoxyribonuclease 7 large subunit (448 aa).

It belongs to the XseA family. Heterooligomer composed of large and small subunits.

It localises to the cytoplasm. The enzyme catalyses Exonucleolytic cleavage in either 5'- to 3'- or 3'- to 5'-direction to yield nucleoside 5'-phosphates.. Bidirectionally degrades single-stranded DNA into large acid-insoluble oligonucleotides, which are then degraded further into small acid-soluble oligonucleotides. The polypeptide is Exodeoxyribonuclease 7 large subunit (Shewanella baltica (strain OS155 / ATCC BAA-1091)).